The sequence spans 412 residues: Peptidyl-prolyl cis-trans isomerase FKBP8 (412 aa).

The disordered stretch occupies residues 1–68; that stretch reads MASCAEPSEP…GQPPAEEAEQ (68 aa). Acidic residues predominate over residues 22–50; the sequence is EDFEVLDGVEDAEGEEEEEEEEEEEDDLS. Positions 120–204 constitute a PPIase FKBP-type domain; that stretch reads GQVVTVHLQT…CLEVTLKTAV (85 aa). Ca(2+) contacts are provided by Asp-149 and Asp-151. The stretch at 221 to 254 is one TPR 1 repeat; the sequence is ANRKRECGNAHYQRADFVLAANSYDLAIKAITSS. Glycyl lysine isopeptide (Lys-Gly) (interchain with G-Cter in ubiquitin) cross-links involve residues Lys-249, Lys-271, Lys-273, and Lys-284. TPR repeat units follow at residues 272–305 and 306–339; these read VKCLNNLAASQLKLDHYRAALRSCSLVLEHQPDN and IKALFRKGKVLAQQGEYSEAIPILRAALKLEPSN. Residue Ser-296 is modified to Phosphoserine. Glycyl lysine isopeptide (Lys-Gly) (interchain with G-Cter in ubiquitin) cross-links involve residues Lys-307, Lys-314, Lys-334, Lys-340, Lys-348, Lys-351, and Lys-352. The chain crosses the membrane as a helical span at residues 390–410; the sequence is WLFGATAVALGGVALSVVIAA.

As to quaternary structure, homomultimers or heteromultimers (Potential). Forms heterodimer with calmodulin. When activated by calmodulin and calcium, interacts with the BH4 domain of BCL2 and weakly with BCL2L1/BCLX isoform Bcl-X(L). Does not bind and inhibit calcineurin. Interacts with ZFYVE27; may negatively regulate ZFYVE27 phosphorylation. (Microbial infection) Interacts with hepatitis C/HCV protein NS5A. Ca(2+) serves as cofactor. Post-translationally, ubiquitinated by PRKN during mitophagy, leading to its degradation and enhancement of mitophagy. Deubiquitinated by USP30. Widely expressed. Highest levels seen in the brain. Highly abundant in the retina.

It localises to the mitochondrion. The protein localises to the mitochondrion membrane. It catalyses the reaction [protein]-peptidylproline (omega=180) = [protein]-peptidylproline (omega=0). In terms of biological role, constitutively inactive PPiase, which becomes active when bound to calmodulin and calcium. Seems to act as a chaperone for BCL2, targets it to the mitochondria and modulates its phosphorylation state. The BCL2/FKBP8/calmodulin/calcium complex probably interferes with the binding of BCL2 to its targets. The active form of FKBP8 may therefore play a role in the regulation of apoptosis. Involved in the inhibition of viral infection by influenza A viruses (IAV). The sequence is that of Peptidyl-prolyl cis-trans isomerase FKBP8 (FKBP8) from Homo sapiens (Human).